Consider the following 366-residue polypeptide: Spermidine/putrescine import ATP-binding protein PotA (366 aa).

An ABC transporter domain is found at 8–239; sequence IRFENVTKQF…PINKFVADFI (232 aa). 41-48 lines the ATP pocket; that stretch reads GPSGCGKT.

It belongs to the ABC transporter superfamily. Spermidine/putrescine importer (TC 3.A.1.11.1) family. As to quaternary structure, the complex is composed of two ATP-binding proteins (PotA), two transmembrane proteins (PotB and PotC) and a solute-binding protein (PotD).

Its subcellular location is the cell membrane. The enzyme catalyses ATP + H2O + polyamine-[polyamine-binding protein]Side 1 = ADP + phosphate + polyamineSide 2 + [polyamine-binding protein]Side 1.. Part of the ABC transporter complex PotABCD involved in spermidine/putrescine import. Responsible for energy coupling to the transport system. This is Spermidine/putrescine import ATP-binding protein PotA from Listeria monocytogenes serovar 1/2a (strain ATCC BAA-679 / EGD-e).